The chain runs to 495 residues: uncharacterized protein (495 aa).

Its subcellular location is the cytoplasm. The protein localises to the nucleus. This is an uncharacterized protein from Saccharomyces cerevisiae (strain ATCC 204508 / S288c) (Baker's yeast).